The sequence spans 846 residues: DNA mismatch repair protein MutS (846 aa).

Position 610–617 (610–617 (GPNMGGKS)) interacts with ATP.

It belongs to the DNA mismatch repair MutS family.

In terms of biological role, this protein is involved in the repair of mismatches in DNA. It is possible that it carries out the mismatch recognition step. This protein has a weak ATPase activity. This chain is DNA mismatch repair protein MutS, found in Legionella pneumophila (strain Corby).